The primary structure comprises 433 residues: uncharacterized protein (433 aa).

It belongs to the arrestin family.

This is an uncharacterized protein from Schizosaccharomyces pombe (strain 972 / ATCC 24843) (Fission yeast).